We begin with the raw amino-acid sequence, 257 residues long: 3-methyl-2-oxobutanoate hydroxymethyltransferase (257 aa).

Mg(2+) is bound by residues Asp42 and Asp86. Residues 42-43, Asp86, and Lys116 each bind 3-methyl-2-oxobutanoate; that span reads DS. Residue Glu118 participates in Mg(2+) binding. Glu185 functions as the Proton acceptor in the catalytic mechanism.

The protein belongs to the PanB family. In terms of assembly, homodecamer; pentamer of dimers. Requires Mg(2+) as cofactor.

It localises to the cytoplasm. The enzyme catalyses 3-methyl-2-oxobutanoate + (6R)-5,10-methylene-5,6,7,8-tetrahydrofolate + H2O = 2-dehydropantoate + (6S)-5,6,7,8-tetrahydrofolate. The protein operates within cofactor biosynthesis; (R)-pantothenate biosynthesis; (R)-pantoate from 3-methyl-2-oxobutanoate: step 1/2. Its function is as follows. Catalyzes the reversible reaction in which hydroxymethyl group from 5,10-methylenetetrahydrofolate is transferred onto alpha-ketoisovalerate to form ketopantoate. The polypeptide is 3-methyl-2-oxobutanoate hydroxymethyltransferase (Prochlorococcus marinus (strain MIT 9312)).